The chain runs to 198 residues: ATP-dependent Clp protease proteolytic subunit (198 aa).

The Nucleophile role is filled by Ser-101. His-126 is a catalytic residue.

It belongs to the peptidase S14 family. Component of the chloroplastic Clp protease core complex.

It is found in the plastid. The protein localises to the chloroplast stroma. It carries out the reaction Hydrolysis of proteins to small peptides in the presence of ATP and magnesium. alpha-casein is the usual test substrate. In the absence of ATP, only oligopeptides shorter than five residues are hydrolyzed (such as succinyl-Leu-Tyr-|-NHMec, and Leu-Tyr-Leu-|-Tyr-Trp, in which cleavage of the -Tyr-|-Leu- and -Tyr-|-Trp bonds also occurs).. Cleaves peptides in various proteins in a process that requires ATP hydrolysis. Has a chymotrypsin-like activity. Plays a major role in the degradation of misfolded proteins. The protein is ATP-dependent Clp protease proteolytic subunit of Solanum bulbocastanum (Wild potato).